A 448-amino-acid polypeptide reads, in one-letter code: N-succinylarginine dihydrolase (448 aa).

Substrate-binding positions include G19 to S28, N110, and H137 to R138. The active site involves E174. R214 contributes to the substrate binding site. The active site involves H250. Substrate contacts are provided by D252 and N365. The active-site Nucleophile is C371.

This sequence belongs to the succinylarginine dihydrolase family. In terms of assembly, homodimer.

It catalyses the reaction N(2)-succinyl-L-arginine + 2 H2O + 2 H(+) = N(2)-succinyl-L-ornithine + 2 NH4(+) + CO2. It functions in the pathway amino-acid degradation; L-arginine degradation via AST pathway; L-glutamate and succinate from L-arginine: step 2/5. Functionally, catalyzes the hydrolysis of N(2)-succinylarginine into N(2)-succinylornithine, ammonia and CO(2). The sequence is that of N-succinylarginine dihydrolase from Pseudomonas fluorescens (strain ATCC BAA-477 / NRRL B-23932 / Pf-5).